Reading from the N-terminus, the 124-residue chain is MATVNQLVRKPRVRKVAKSNVPALEACPQKRGVCTRVYTTTPKKPNSALRKVCRVRLTNGFEVTSYIGGEGHNLQEHSVILIRGGRVKDLPGVRYHTVRGALDCSGVKDRKQARSKYGVKKPKA.

Asp89 carries the post-translational modification 3-methylthioaspartic acid.

It belongs to the universal ribosomal protein uS12 family. In terms of assembly, part of the 30S ribosomal subunit. Contacts proteins S8 and S17. May interact with IF1 in the 30S initiation complex.

Its function is as follows. With S4 and S5 plays an important role in translational accuracy. In terms of biological role, interacts with and stabilizes bases of the 16S rRNA that are involved in tRNA selection in the A site and with the mRNA backbone. Located at the interface of the 30S and 50S subunits, it traverses the body of the 30S subunit contacting proteins on the other side and probably holding the rRNA structure together. The combined cluster of proteins S8, S12 and S17 appears to hold together the shoulder and platform of the 30S subunit. In Erwinia tasmaniensis (strain DSM 17950 / CFBP 7177 / CIP 109463 / NCPPB 4357 / Et1/99), this protein is Small ribosomal subunit protein uS12.